The chain runs to 578 residues: Sulfite reductase [NADPH] hemoprotein beta-component (578 aa).

Residues 1–21 (MTNTLAGPDRSRDISQPLEKL) form a disordered region. [4Fe-4S] cluster-binding residues include Cys443, Cys449, Cys488, and Cys492. Residue Cys492 coordinates siroheme.

Belongs to the nitrite and sulfite reductase 4Fe-4S domain family. Alpha(8)-beta(8). The alpha component is a flavoprotein, the beta component is a hemoprotein. Siroheme serves as cofactor. The cofactor is [4Fe-4S] cluster.

It carries out the reaction hydrogen sulfide + 3 NADP(+) + 3 H2O = sulfite + 3 NADPH + 4 H(+). It participates in sulfur metabolism; hydrogen sulfide biosynthesis; hydrogen sulfide from sulfite (NADPH route): step 1/1. Its function is as follows. Component of the sulfite reductase complex that catalyzes the 6-electron reduction of sulfite to sulfide. This is one of several activities required for the biosynthesis of L-cysteine from sulfate. This is Sulfite reductase [NADPH] hemoprotein beta-component from Methylocella silvestris (strain DSM 15510 / CIP 108128 / LMG 27833 / NCIMB 13906 / BL2).